Reading from the N-terminus, the 663-residue chain is RING finger protein 145 (663 aa).

14 helical membrane passes run 53-73, 77-97, 123-143, 146-166, 168-188, 205-222, 225-245, 275-295, 316-336, 340-360, 384-404, 410-430, 460-480, and 482-502; these read YLALNMHYVGYILSVVLLTLP, LVQLYLYFVTALLLYAGHQIS, FTTALIGQLVVCTLCSCVMKT, IWLFSAHMLPLLARLCLVPLE, IVIINKFAMIFTGLEVLYFLG, LVQVVEVYGLLALGMSLW, LVVPVLFMVFWLVLFALQIYS, YSLLGLVFTVSFVALGVLTLC, TEGVTLLILAVQTGLIELQVV, FLLSIILFIVVASILQSMLEI, SLCLFLLVFPAYMAYMICQFF, LLIIISSSILTSLQVLGTLFI, LLEFVVALCVVAYGVSETIFG, and WTVMGSMIIFIHSYYNVWLRA. Residues 81–84 carry the YLYF motif motif; sequence YLYF. Residue C537 is part of the active site. The RING-type; atypical zinc finger occupies 537-575; that stretch reads CAICYQDMKSAVITPCSHFFHAGCLKKWLYVQDTCPLCH. A disordered region spans residues 587-663; that stretch reads LGTEAAPQPP…EGEVCPVESA (77 aa). The span at 619–628 shows a compositional bias: polar residues; the sequence is GTGTQEGSGD.

As to quaternary structure, interacts (via YLYF motif) with INSIG1 and INSIG2.

It is found in the endoplasmic reticulum membrane. It carries out the reaction S-ubiquitinyl-[E2 ubiquitin-conjugating enzyme]-L-cysteine + [acceptor protein]-L-lysine = [E2 ubiquitin-conjugating enzyme]-L-cysteine + N(6)-ubiquitinyl-[acceptor protein]-L-lysine.. In terms of biological role, E3 ubiquitin ligase that catalyzes the direct transfer of ubiquitin from E2 ubiquitin-conjugating enzyme to a specific substrate. In response to bacterial infection, negatively regulates the phagocyte oxidative burst by controlling the turnover of the NADPH oxidase complex subunits. Promotes monoubiquitination of CYBA and 'Lys-48'-linked polyubiquitination and degradation of CYBB NADPH oxidase catalytic subunits, both essential for the generation of antimicrobial reactive oxygen species. Involved in the maintenance of cholesterol homeostasis. In response to high sterol concentrations ubiquitinates HMGCR, a rate-limiting enzyme in cholesterol biosynthesis, and targets it for degradation. The interaction with INSIG1 is required for this function. In addition, triggers ubiquitination of SCAP, likely inhibiting its transport to the Golgi apparatus and the subsequent processing/maturation of SREBPF2, ultimately down-regulating cholesterol biosynthesis. In Mus musculus (Mouse), this protein is RING finger protein 145.